Reading from the N-terminus, the 91-residue chain is Large ribosomal subunit protein eL34 (91 aa).

This sequence belongs to the eukaryotic ribosomal protein eL34 family.

This chain is Large ribosomal subunit protein eL34, found in Thermofilum pendens (strain DSM 2475 / Hrk 5).